Consider the following 738-residue polypeptide: Alcohol dehydrogenase (quinone), dehydrogenase subunit (738 aa).

An N-terminal signal peptide occupies residues 1–35 (MISAVFGKRRSLSRTLTAGTICAALISGYATMASA). Glu-97 is a binding site for pyrroloquinoline quinone. A disulfide bridge connects residues Cys-143 and Cys-144. Arg-149 serves as a coordination point for pyrroloquinoline quinone. Ca(2+) is bound at residue Glu-217. Residue Thr-278 coordinates pyrroloquinoline quinone. Asn-298 and Asp-343 together coordinate Ca(2+). Catalysis depends on Asp-343, which acts as the Proton acceptor. Residues Lys-370 and Ile-584 each coordinate pyrroloquinoline quinone. The Cytochrome c domain maps to 634-738 (FDSKRTDNGY…NADGIPEQLP (105 aa)). Positions 650, 653, 654, and 693 each coordinate heme c.

It belongs to the bacterial PQQ dehydrogenase family. As to quaternary structure, the alcohol dehydrogenase multicomponent enzyme system is composed of a dehydrogenase subunit I (AdhA) and a cytochrome c subunit II (AdhB). Pyrroloquinoline quinone serves as cofactor. It depends on Ca(2+) as a cofactor. Heme c is required as a cofactor.

It localises to the cell membrane. The enzyme catalyses ethanol + a ubiquinone = a ubiquinol + acetaldehyde. Its function is as follows. Dehydrogenase component of the alcohol dehydrogenase multicomponent enzyme system which is involved in the production of acetic acid and in the ethanol oxidase respiratory chain. Quinohemoprotein alcohol dehydrogenase (ADH) catalyzes the oxidation of ethanol to acetaldehyde by transferring electrons to the ubiquinone embedded in the membrane phospholipids. The electrons transfer from ethanol to membranous ubiquinone occurs from pyrroloquinoline quinone (PQQ) to one heme c in subunit I (AdhA), and finally to two heme c in subunit II (AdhB). Besides ubiquinone reduction, ADH also has a ubiquinol (QH2) oxidation reaction which mediates electron transfer from ubiquinol to the non-energy generating bypass oxidase system. The electrons transfer occurs from ubiquinol (QH2) to the additional heme c within subunit II (AdhB). The chain is Alcohol dehydrogenase (quinone), dehydrogenase subunit (adhA) from Gluconacetobacter polyoxogenes (Acetobacter polyoxogenes).